Reading from the N-terminus, the 541-residue chain is Acyl-CoA ligase M9 (541 aa).

186 to 197 is a binding site for AMP; the sequence is AMSTSGTTGLPK. The tract at residues 445 to 519 is AMP-binding; sequence ELEAVLHQMP…DSLPRNSSGK (75 aa).

Belongs to the ATP-dependent AMP-binding enzyme family.

It participates in secondary metabolite biosynthesis. In terms of biological role, acyl-CoA ligase; part of the gene cluster that mediates the biosynthesis of squalestatin S1 (SQS1, also known as zaragozic acid A), a heavily oxidized fungal polyketide that offers potent cholesterol lowering activity by targeting squalene synthase (SS). SQS1 is composed of a 2,8-dioxobicyclic[3.2.1]octane-3,4,5-tricarboxyclic acid core that is connected to two lipophilic polyketide arms. These initial steps feature the priming of an unusual benzoic acid starter unit onto the highly reducing polyketide synthase pks2, followed by oxaloacetate extension and product release to generate a tricarboxylic acid containing product. The phenylalanine ammonia lyase (PAL) M7 and the acyl-CoA ligase M9 are involved in transforming phenylalanine into benzoyl-CoA. The citrate synthase-like protein R3 is involved in connecting the C-alpha-carbons of the hexaketide chain and oxaloacetate to afford the tricarboxylic acid unit. The potential hydrolytic enzymes, M8 and M10, are in close proximity to pks2 and may participate in product release. On the other side, the tetraketide arm is synthesized by a the squalestatin tetraketide synthase pks1 and enzymatically esterified to the core in the last biosynthetic step, by the acetyltransferase M4. The biosynthesis of the tetraketide must involve 3 rounds of chain extension. After the first and second rounds methyl-transfer occurs, and in all rounds of extension the ketoreductase and dehydratase are active. The enoyl reductase and C-MeT of pks1 are not active in the final round of extension. The acetyltransferase M4 appears to have a broad substrate selectivity for its acyl CoA substrate, allowing the in vitro synthesis of novel squalestatins. The biosynthesis of SQS1 requires several oxidative steps likely performed by oxidoreductases M1, R1 and R2. Finally, in support of the identification of the cluster as being responsible for SQS1 production, the cluster contains a gene encoding a putative squalene synthase (SS) R6, suggesting a likely mechanism for self-resistance. This chain is Acyl-CoA ligase M9, found in Phoma sp. (strain ATCC 20986 / MF5453).